Reading from the N-terminus, the 97-residue chain is Small ribosomal subunit protein uS17 (97 aa).

The interval 1–20 (MSEATVNDNAAVKNEKGARK) is disordered.

Belongs to the universal ribosomal protein uS17 family. As to quaternary structure, part of the 30S ribosomal subunit.

Functionally, one of the primary rRNA binding proteins, it binds specifically to the 5'-end of 16S ribosomal RNA. The sequence is that of Small ribosomal subunit protein uS17 from Corynebacterium jeikeium (strain K411).